A 310-amino-acid chain; its full sequence is Porphobilinogen deaminase (310 aa).

C242 carries the S-(dipyrrolylmethanemethyl)cysteine modification.

It belongs to the HMBS family. Monomer. The cofactor is dipyrromethane.

It catalyses the reaction 4 porphobilinogen + H2O = hydroxymethylbilane + 4 NH4(+). Its pathway is porphyrin-containing compound metabolism; protoporphyrin-IX biosynthesis; coproporphyrinogen-III from 5-aminolevulinate: step 2/4. Its function is as follows. Tetrapolymerization of the monopyrrole PBG into the hydroxymethylbilane pre-uroporphyrinogen in several discrete steps. This Alcanivorax borkumensis (strain ATCC 700651 / DSM 11573 / NCIMB 13689 / SK2) protein is Porphobilinogen deaminase.